The following is a 337-amino-acid chain: Succinylglutamate desuccinylase (337 aa).

The Zn(2+) site is built by H59, E62, and H152. The active site involves E216.

This sequence belongs to the AspA/AstE family. Succinylglutamate desuccinylase subfamily. It depends on Zn(2+) as a cofactor.

It carries out the reaction N-succinyl-L-glutamate + H2O = L-glutamate + succinate. It participates in amino-acid degradation; L-arginine degradation via AST pathway; L-glutamate and succinate from L-arginine: step 5/5. Its function is as follows. Transforms N(2)-succinylglutamate into succinate and glutamate. The protein is Succinylglutamate desuccinylase of Ectopseudomonas mendocina (strain ymp) (Pseudomonas mendocina).